Here is a 724-residue protein sequence, read N- to C-terminus: Phosphoribosylformylglycinamidine synthase subunit PurL (724 aa).

His34 is an active-site residue. Residue Tyr37 participates in ATP binding. Glu78 contacts Mg(2+). Residues 79 to 82 (SHNH) and Arg101 each bind substrate. His80 acts as the Proton acceptor in catalysis. Residue Asp102 coordinates Mg(2+). Gln226 is a binding site for substrate. Asp254 provides a ligand contact to Mg(2+). 298–300 (ESQ) contacts substrate. Residues Asp480 and Gly517 each coordinate ATP. Position 518 (Asn518) interacts with Mg(2+). Residue Ser520 participates in substrate binding.

Belongs to the FGAMS family. In terms of assembly, monomer. Part of the FGAM synthase complex composed of 1 PurL, 1 PurQ and 2 PurS subunits.

The protein localises to the cytoplasm. It carries out the reaction N(2)-formyl-N(1)-(5-phospho-beta-D-ribosyl)glycinamide + L-glutamine + ATP + H2O = 2-formamido-N(1)-(5-O-phospho-beta-D-ribosyl)acetamidine + L-glutamate + ADP + phosphate + H(+). Its pathway is purine metabolism; IMP biosynthesis via de novo pathway; 5-amino-1-(5-phospho-D-ribosyl)imidazole from N(2)-formyl-N(1)-(5-phospho-D-ribosyl)glycinamide: step 1/2. Functionally, part of the phosphoribosylformylglycinamidine synthase complex involved in the purines biosynthetic pathway. Catalyzes the ATP-dependent conversion of formylglycinamide ribonucleotide (FGAR) and glutamine to yield formylglycinamidine ribonucleotide (FGAM) and glutamate. The FGAM synthase complex is composed of three subunits. PurQ produces an ammonia molecule by converting glutamine to glutamate. PurL transfers the ammonia molecule to FGAR to form FGAM in an ATP-dependent manner. PurS interacts with PurQ and PurL and is thought to assist in the transfer of the ammonia molecule from PurQ to PurL. This chain is Phosphoribosylformylglycinamidine synthase subunit PurL, found in Methanopyrus kandleri (strain AV19 / DSM 6324 / JCM 9639 / NBRC 100938).